Reading from the N-terminus, the 220-residue chain is MAHFIDLNSLTNTLPSLPKLPESRKTGKSSGFACRRTEEFQEPDSVQITRRMTLGFAVSIGLTGILGENNVSLAQDNGFWIDGPLPIPPIYNNIVNEKTGTRTFIKKGVYVADIGTKGRMYRVKKNAFDLLAMEDLIGPDTLNYVKKYLRLKSTFLFYDFDNLISAAASEDKQPLTDLANRLFDNFEKLEDAAKTKNLAETESCYKDTKFLLQEVMTRMA.

A chloroplast-targeting transit peptide spans 1–35 (MAHFIDLNSLTNTLPSLPKLPESRKTGKSSGFACR). The N-terminal 42 residues, 36 to 77 (RTEEFQEPDSVQITRRMTLGFAVSIGLTGILGENNVSLAQDN), are a transit peptide targeting the thylakoid.

Belongs to the PsbQ family. In terms of assembly, part of the chloroplast NDH complex, composed of a mixture of chloroplast and nucleus encoded subunits. Component of the NDH lumenal subcomplex, at least composed of PnsL1, PnsL2, PnsL3, PnsL4 and PnsL5.

It localises to the plastid. The protein resides in the chloroplast thylakoid membrane. NDH shuttles electrons from NAD(P)H:plastoquinone, via FMN and iron-sulfur (Fe-S) centers, to quinones in the photosynthetic chain and possibly in a chloroplast respiratory chain. The immediate electron acceptor for the enzyme in this species is believed to be plastoquinone. Couples the redox reaction to proton translocation, and thus conserves the redox energy in a proton gradient. Required for both formation and activity of the chloroplast NAD(P)H dehydrogenase (NDH) complex. The sequence is that of Photosynthetic NDH subunit of lumenal location 3, chloroplastic from Arabidopsis thaliana (Mouse-ear cress).